The primary structure comprises 176 residues: NAD(P)H-quinone oxidoreductase subunit J (176 aa).

The protein belongs to the complex I 30 kDa subunit family. NDH-1 can be composed of about 15 different subunits; different subcomplexes with different compositions have been identified which probably have different functions.

Its subcellular location is the cellular thylakoid membrane. It carries out the reaction a plastoquinone + NADH + (n+1) H(+)(in) = a plastoquinol + NAD(+) + n H(+)(out). The catalysed reaction is a plastoquinone + NADPH + (n+1) H(+)(in) = a plastoquinol + NADP(+) + n H(+)(out). NDH-1 shuttles electrons from an unknown electron donor, via FMN and iron-sulfur (Fe-S) centers, to quinones in the respiratory and/or the photosynthetic chain. The immediate electron acceptor for the enzyme in this species is believed to be plastoquinone. Couples the redox reaction to proton translocation, and thus conserves the redox energy in a proton gradient. Cyanobacterial NDH-1 also plays a role in inorganic carbon-concentration. This chain is NAD(P)H-quinone oxidoreductase subunit J, found in Nostoc punctiforme (strain ATCC 29133 / PCC 73102).